The chain runs to 228 residues: MALRTLVSRRTLATGLGFRQQLRGLQTFSLPDLPYDYGALEPAISGDIMQLHHQNHHQTYVTNYNKALEQLHDAISKGDAPTVAKLHSAIKFNGGGHINHSIFWKNLAPVREGGGEPPKGSLGWAIDTNFGSLEALVQKMNAEGAALQGSGWVWLGVDKELKRLVIETTANQDPLVSKGANLVPLLGIDVWEHAYYLQYKNVRPDYLKNIWKVMNWKYANEVYEKECP.

A mitochondrion-targeting transit peptide spans 1 to 24; sequence MALRTLVSRRTLATGLGFRQQLRG. Mn(2+) contacts are provided by His52, His100, Asp189, and His193.

Belongs to the iron/manganese superoxide dismutase family. In terms of assembly, homotetramer. It depends on Mn(2+) as a cofactor.

It localises to the mitochondrion matrix. It carries out the reaction 2 superoxide + 2 H(+) = H2O2 + O2. Its function is as follows. Destroys superoxide anion radicals which are normally produced within the cells and which are toxic to biological systems. This is Superoxide dismutase [Mn], mitochondrial (SODA) from Nicotiana plumbaginifolia (Leadwort-leaved tobacco).